A 282-amino-acid chain; its full sequence is Bifunctional protein FolD (282 aa).

Residues 163 to 165 (NRS), Thr-188, and Ile-229 contribute to the NADP(+) site.

Belongs to the tetrahydrofolate dehydrogenase/cyclohydrolase family. In terms of assembly, homodimer.

The catalysed reaction is (6R)-5,10-methylene-5,6,7,8-tetrahydrofolate + NADP(+) = (6R)-5,10-methenyltetrahydrofolate + NADPH. The enzyme catalyses (6R)-5,10-methenyltetrahydrofolate + H2O = (6R)-10-formyltetrahydrofolate + H(+). The protein operates within one-carbon metabolism; tetrahydrofolate interconversion. Its function is as follows. Catalyzes the oxidation of 5,10-methylenetetrahydrofolate to 5,10-methenyltetrahydrofolate and then the hydrolysis of 5,10-methenyltetrahydrofolate to 10-formyltetrahydrofolate. In Malacoplasma penetrans (strain HF-2) (Mycoplasma penetrans), this protein is Bifunctional protein FolD.